Reading from the N-terminus, the 497-residue chain is MVVNKRLILILLFILNTAKSDELSWKGNDFTLYARQMPLAEVLHLLSENYDTAITISPLITATFSGKIPPGPPVDILNNLAAQYDLLTWFDGSMLYVYPASLLKHQVITFNILSTGRFIHYLRSQNILSSPGCEVKEITGTKAVEVSGVPSCLTRISQLASVLDNALIKRKDSAVSVSIYTLKYATAMDTQYQYRDQSVVVPGVVSVLREMSKTSVPTSSTNNGSPATQALPMFAADPRQNAVIVRDYAANMAGYRKLITELDQRQQMIEISVKIIDVNAGDINQLGIDWGTAVSLGGKKIAFNTGLNDGGASGFSTVISDTSNFMVRLNALEKSSQAYVLSQPSVVTLNNIQAVLDKNITFYTKLQGEKVAKLESITTGSLLRVTPRLLNDNGTQKIMLNLNIQDGQQSDTQSETDPLPEVQNSEIASQATLLAGQSLLLGGFKQGKQIHSQNKIPLLGDIPVVGHLFRNDTTQVHSVIRLFLIKASVVNNGISHG.

The signal sequence occupies residues 1-20 (MVVNKRLILILLFILNTAKS).

Belongs to the bacterial secretin family. T3SS SctC subfamily. The core secretion machinery of the T3SS is composed of approximately 20 different proteins, including cytoplasmic components, a base, an export apparatus and a needle. This subunit is part of the base, which anchors the injectisome in the bacterial cell envelope. Forms a stable homooligomeric complex.

It is found in the cell outer membrane. Functionally, component of the type III secretion system (T3SS), also called injectisome, which is used to inject bacterial effector proteins into eukaryotic host cells. Forms a ring-shaped multimeric structure with an apparent central pore in the outer membrane. Required for secretion of some type III-secreted effectors including the SpvB exotoxin. This is SPI-2 type 3 secretion system secretin from Salmonella typhimurium (strain 14028s / SGSC 2262).